Consider the following 294-residue polypeptide: Homeobox-leucine zipper protein ATHB-13 (294 aa).

Residues 82-141 constitute a DNA-binding region (homeobox); the sequence is MGEKKRRLNMEQVKTLEKNFELGNKLEPERKMQLARALGLQPRQIAIWFQNRRARWKTKQ. Residues 142-177 form a leucine-zipper region; it reads LEKDYDTLKRQFDTLKAENDLLQTHNQKLQAEIMGL. The segment at 181-246 is disordered; the sequence is EQTESINLNK…FFPPSPATAT (66 aa). Residues 197-210 show a composition bias toward low complexity; that stretch reads SNRSDNSSDNLRLD. A compositionally biased stretch (polar residues) spans 214 to 223; it reads APPSNDSTLT.

The protein belongs to the HD-ZIP homeobox family. Class I subfamily. Predominantly expressed in leaves and flowers.

It is found in the nucleus. Functionally, probable transcription factor that may act in the sucrose-signaling pathway. In Arabidopsis thaliana (Mouse-ear cress), this protein is Homeobox-leucine zipper protein ATHB-13 (ATHB-13).